Reading from the N-terminus, the 153-residue chain is Nitrogen regulatory protein (153 aa).

One can recognise a PTS EIIA type-2 domain in the interval 5–148 (DLVAPEAILP…QAIYSVLALP (144 aa)). The Tele-phosphohistidine intermediate role is filled by His-66.

It is found in the cytoplasm. In terms of biological role, seems to have a role in regulating nitrogen assimilation. The polypeptide is Nitrogen regulatory protein (ptsN) (Bradyrhizobium diazoefficiens (strain JCM 10833 / BCRC 13528 / IAM 13628 / NBRC 14792 / USDA 110)).